The following is a 237-amino-acid chain: DCN1-like protein 5 (237 aa).

Residues serine 9, serine 41, and serine 48 each carry the phosphoserine modification. One can recognise a DCUN1 domain in the interval 46–232; that stretch reads FSSKKCLAWF…LLDEFVEWQK (187 aa).

As to quaternary structure, part of a complex that contains DCUN1D5, CUL1 and RBX1; this interaction is bridged by CUL1. Interacts (via the DCUN1 domain) with the unneddylated cullins: interacts with CUL1, CUL2, CUL3, CUL4A, CUL4B and CUL5; these interactions promote the cullin neddylation and the identity of the cullin dictates the affinity of the interaction. Interacts (via DCUN1 domain) with UBE2M (N-terminally acetylated form) and probably with UBE2F (N-terminally acetylated form). May also interact with regulators or subunits of cullin-RING ligases such as RBX1, RNF7, ELOB and DDB1; these interactions are bridged by cullins. Interacts with CAND1; this interaction is bridged by cullins and strongly inhibits the neddylation of cullins. These CAND-cullin-DCNL complexes can only be neddylated in the presence of a substrate adapter. Phosphorylation at Ser-41 is independent of cullin's interaction. Phosphorylated in response to both TICAM1 and MYD88 dependent Toll-like receptor (TLR) pathway activation. Phosphorylated in response to IL1B stimulation.

Its subcellular location is the nucleus. The protein resides in the cytoplasm. The protein localises to the cytoskeleton. It localises to the spindle. Functionally, contributes to the neddylation of all cullins by transferring NEDD8 from N-terminally acetylated NEDD8-conjugating E2s enzyme to different cullin C-terminal domain-RBX complexes which is necessary for the activation of cullin-RING E3 ubiquitin ligases (CRLs). May play a role in DNA damage response and may participate in cell proliferation and anchorage-independent cell growth. This Pongo abelii (Sumatran orangutan) protein is DCN1-like protein 5.